Reading from the N-terminus, the 368-residue chain is Galactoside 2-alpha-L-fucosyltransferase Sec1 (368 aa).

The Cytoplasmic portion of the chain corresponds to 1–20 (MPSDSCLLSLTVLQRLRAIC). The helical; Signal-anchor for type II membrane protein transmembrane segment at 21-41 (PPLSTFYLFFVIFVVSTIFHC) threads the bilayer. The Lumenal segment spans residues 42–368 (HRRLGLVPAP…APKRHWGALL (327 aa)). 3 N-linked (GlcNAc...) asparagine glycosylation sites follow: Asn195, Asn289, and Asn315.

It belongs to the glycosyltransferase 11 family.

It localises to the golgi apparatus. Its subcellular location is the golgi stack membrane. The enzyme catalyses a ganglioside GM1 + GDP-beta-L-fucose = a ganglioside Fuc-GM1 + GDP + H(+). It functions in the pathway protein modification; protein glycosylation. Its function is as follows. Catalyzes the transfer of alpha 1,2-linked fucose to ganglioside GM1 and galacto-N-biose. The polypeptide is Galactoside 2-alpha-L-fucosyltransferase Sec1 (Mus musculus (Mouse)).